The following is a 121-amino-acid chain: Dihydroneopterin aldolase (121 aa).

Substrate is bound by residues Glu16 and Met111.

The protein belongs to the archaeal dihydroneopterin aldolase family. In terms of assembly, homotetramer.

It catalyses the reaction 7,8-dihydroneopterin = 6-hydroxymethyl-7,8-dihydropterin + glycolaldehyde. It functions in the pathway cofactor biosynthesis; 5,6,7,8-tetrahydromethanopterin biosynthesis. Functionally, catalyzes the conversion of 7,8-dihydroneopterin (H2Neo) to 6-hydroxymethyl-7,8-dihydropterin (6-HMD). In Methanopyrus kandleri (strain AV19 / DSM 6324 / JCM 9639 / NBRC 100938), this protein is Dihydroneopterin aldolase.